Reading from the N-terminus, the 1304-residue chain is DNA-directed RNA polymerase subunit beta' (1304 aa).

A disordered region spans residues 1–23 (MSEKGRFSAGLSRQAADGNKADA). 4 residues coordinate Zn(2+): Cys241, Cys315, Cys322, and Cys325. Acidic residues predominate over residues 1256–1268 (AAEPEPDEEEEEP). The interval 1256–1304 (AAEPEPDEEEEEPAVLPELPPRLILEDDQLIDDSTPAFDELEEDDDEEE) is disordered. The segment covering 1269 to 1278 (AVLPELPPRL) has biased composition (low complexity). Over residues 1294–1304 (DELEEDDDEEE) the composition is skewed to acidic residues.

Belongs to the RNA polymerase beta' chain family. RpoC2 subfamily. As to quaternary structure, in cyanobacteria the RNAP catalytic core is composed of 2 alpha, 1 beta, 1 beta', 1 gamma and 1 omega subunit. When a sigma factor is associated with the core the holoenzyme is formed, which can initiate transcription. Zn(2+) is required as a cofactor.

The enzyme catalyses RNA(n) + a ribonucleoside 5'-triphosphate = RNA(n+1) + diphosphate. Its function is as follows. DNA-dependent RNA polymerase catalyzes the transcription of DNA into RNA using the four ribonucleoside triphosphates as substrates. This Synechococcus sp. (strain JA-2-3B'a(2-13)) (Cyanobacteria bacterium Yellowstone B-Prime) protein is DNA-directed RNA polymerase subunit beta'.